A 138-amino-acid polypeptide reads, in one-letter code: Small ribosomal subunit protein uS11c (138 aa).

The segment at 1 to 22 (MAKPIPKIGSRKNARSGSRKHL) is disordered. Over residues 9-22 (GSRKNARSGSRKHL) the composition is skewed to basic residues.

It belongs to the universal ribosomal protein uS11 family. Part of the 30S ribosomal subunit.

The protein localises to the plastid. The protein resides in the chloroplast. This is Small ribosomal subunit protein uS11c from Lotus japonicus (Lotus corniculatus var. japonicus).